A 373-amino-acid chain; its full sequence is Alanine racemase (373 aa).

Lys-37 serves as the catalytic Proton acceptor; specific for D-alanine. Lys-37 is subject to N6-(pyridoxal phosphate)lysine. Arg-135 contributes to the substrate binding site. Catalysis depends on Tyr-266, which acts as the Proton acceptor; specific for L-alanine. Met-313 contacts substrate.

It belongs to the alanine racemase family. Pyridoxal 5'-phosphate serves as cofactor.

It carries out the reaction L-alanine = D-alanine. The protein operates within amino-acid biosynthesis; D-alanine biosynthesis; D-alanine from L-alanine: step 1/1. Catalyzes the interconversion of L-alanine and D-alanine. This organism is able to use both L- and D-alanine as a nitrogen source. May also prevent D-alanine from interfering with the use of L-alanine. In Methanococcus maripaludis (strain DSM 14266 / JCM 13030 / NBRC 101832 / S2 / LL), this protein is Alanine racemase (alr).